A 658-amino-acid chain; its full sequence is Glycogen debranching enzyme (658 aa).

Asp335 (nucleophile) is an active-site residue. Glu370 acts as the Proton donor in catalysis. Positions Asn457–Thr468 are enriched in basic and acidic residues. A disordered region spans residues Asn457–Leu481.

The protein belongs to the glycosyl hydrolase 13 family.

The catalysed reaction is Hydrolysis of (1-&gt;6)-alpha-D-glucosidic linkages to branches with degrees of polymerization of three or four glucose residues in limit dextrin.. It participates in glycan degradation; glycogen degradation. Functionally, removes maltotriose and maltotetraose chains that are attached by 1,6-alpha-linkage to the limit dextrin main chain, generating a debranched limit dextrin. The sequence is that of Glycogen debranching enzyme from Pectobacterium atrosepticum (strain SCRI 1043 / ATCC BAA-672) (Erwinia carotovora subsp. atroseptica).